A 188-amino-acid polypeptide reads, in one-letter code: Putative manganese efflux pump MntP (188 aa).

A run of 6 helical transmembrane segments spans residues 3 to 23 (ITAT…ASIG), 41 to 61 (LIFG…GMLA), 66 to 86 (LEWN…RMII), 107 to 129 (LLVT…LAFL), 143 to 163 (ATLI…PLLG), and 168 to 188 (ILGG…HFHG).

Belongs to the MntP (TC 9.B.29) family.

It localises to the cell inner membrane. In terms of biological role, probably functions as a manganese efflux pump. This chain is Putative manganese efflux pump MntP, found in Citrobacter koseri (strain ATCC BAA-895 / CDC 4225-83 / SGSC4696).